Reading from the N-terminus, the 144-residue chain is Large ribosomal subunit protein uL22 (144 aa).

The tract at residues 1–38 (MAETQTTKKGAKRVRQPVPARRSKPNRPAKAAPGPHAS) is disordered. Over residues 9–27 (KGAKRVRQPVPARRSKPNR) the composition is skewed to basic residues.

The protein belongs to the universal ribosomal protein uL22 family. In terms of assembly, part of the 50S ribosomal subunit.

This protein binds specifically to 23S rRNA; its binding is stimulated by other ribosomal proteins, e.g. L4, L17, and L20. It is important during the early stages of 50S assembly. It makes multiple contacts with different domains of the 23S rRNA in the assembled 50S subunit and ribosome. In terms of biological role, the globular domain of the protein is located near the polypeptide exit tunnel on the outside of the subunit, while an extended beta-hairpin is found that lines the wall of the exit tunnel in the center of the 70S ribosome. This Anaeromyxobacter sp. (strain Fw109-5) protein is Large ribosomal subunit protein uL22.